Here is a 133-residue protein sequence, read N- to C-terminus: MAAPFALRKIGVPPNSANLTEARRRVFDFFRAACRSIPTIMDIYNLQDVVAPSQLRYAISAQIRNNAHITDPKVIDLLIFKGMEELTDIVDHAKQRHHIIGQYVVGEGLVQNTGNKDQGKTDFLKNFYTSNYF.

The protein belongs to the complex I LYR family. Complex I is composed of at least 49 different subunits.

Its subcellular location is the mitochondrion inner membrane. In terms of biological role, accessory subunit of the mitochondrial membrane respiratory chain NADH dehydrogenase (Complex I), that is believed to be not involved in catalysis. Complex I functions in the transfer of electrons from NADH to the respiratory chain. The immediate electron acceptor for the enzyme is believed to be ubiquinone. This is NADH dehydrogenase [ubiquinone] 1 alpha subcomplex subunit 6 from Arabidopsis thaliana (Mouse-ear cress).